Here is a 185-residue protein sequence, read N- to C-terminus: Ribosome-recycling factor (185 aa).

The disordered stretch occupies residues 140–168 (KKEQKDGNITEDEQRNLEKQVQKITDDST).

The protein belongs to the RRF family.

It localises to the cytoplasm. Its function is as follows. Responsible for the release of ribosomes from messenger RNA at the termination of protein biosynthesis. May increase the efficiency of translation by recycling ribosomes from one round of translation to another. In Lactobacillus helveticus (strain DPC 4571), this protein is Ribosome-recycling factor.